We begin with the raw amino-acid sequence, 570 residues long: MATRPPLMPPANETESSVSRISREGKKITYKLSVMQQPERARACGAGAKSSADRRPVDPPPVVELRIFESDPNDDLHKTDITFAYNANFFLFATLETARPMAQGRLTGPPTCPVLTGVPVAGVAYLDRPQQAGYFIFPDLSVRHEGRYRLSFHLYEEIKDIKDADKDTPMPDLNSSTNLTKPSAPKAHLNFRLEVKSVPFTVYSAKKFPGLATSTSLSRIIAEQGCRVRIRRDVRMRRRGEKRTDDYDFDDERAFATRSDRYTTPDMYAANSAERARSTSISTTADTSFPYGSDAQRRPSAGDYGFQGAQPYQRSMPAASAAPAPAPVHSPATSAQTSSYQSHLSFGATQSQYPAPQLPPTPQSATPTNTYSPHPSYSHSRNPSNGTEYDATSSGYPYPQPRLPADRPSYSKAALPPLRLEPPKAPNMQTSTDSRSSDANAYPTLSQPPVPRAPTPANHVTSLPPLKVLSGEYSHPSQPNAQSPHHDLGSGKRLLWETNHTLSKRSHEETFGSDERPLHNGMRPDMDQYPSMGRKQPDYGRLPFYTDSRDEMAYKRANGRMVMKILPALP.

4 disordered regions span residues 1–24 (MATR…ISRE), 39–60 (ERAR…VDPP), 266–491 (DMYA…LGSG), and 504–541 (KRSH…DYGR). A Velvet domain is found at 25-231 (GKKITYKLSV…AEQGCRVRIR (207 aa)). Residues 39–44 (ERARAC) carry the Nuclear localization signal motif. Polar residues predominate over residues 278–287 (STSISTTADT). Positions 315-335 (SMPAASAAPAPAPVHSPATSA) are enriched in low complexity. Polar residues-rich tracts occupy residues 336-354 (QTSS…SQYP), 363-395 (QSAT…TSSG), and 427-445 (NMQT…YPTL). Residues 454–493 (PTPANHVTSLPPLKVLSGEYSHPSQPNAQSPHHDLGSGKR) form a PEST region. Over residues 505–526 (RSHEETFGSDERPLHNGMRPDM) the composition is skewed to basic and acidic residues.

Belongs to the velvet family. VeA subfamily. Component of the heterotrimeric velvet complex composed of laeA, veA and velB; VeA acting as a bridging protein between laeA and velB.

It localises to the nucleus. The protein localises to the cytoplasm. Functionally, component of the velvet transcription factor complex that controls sexual/asexual developmental ratio in response to light, promoting sexual development in the darkness while stimulating asexual sporulation under illumination. The velvet complex hat acts as a global regulator for secondary metabolite gene expression. Controls the expression of hundreds of genes, including those comprising more than a dozen known secondary metabolite gene clusters. Controls the expression of the gliotoxin gene cluster. Controls the expression of the fumagillin, fumitremorgin G, fumigaclavine C and glionitrin gene clusters. The regulation of the fumagillin gene cluster and fumagillin production is performed through direct control of the expression of fumR. Negatively regulates conidiation. Required for normal protease activity. This Aspergillus fumigatus (strain ATCC MYA-4609 / CBS 101355 / FGSC A1100 / Af293) (Neosartorya fumigata) protein is Developmental and secondary metabolism regulator veA.